Here is a 395-residue protein sequence, read N- to C-terminus: Phosphoglycerate kinase (395 aa).

Substrate contacts are provided by residues 21–23 (DFN), arginine 36, 59–62 (HLGR), arginine 120, and arginine 153. ATP contacts are provided by residues lysine 203, glutamate 325, and 351-354 (GGDS).

The protein belongs to the phosphoglycerate kinase family. In terms of assembly, monomer.

It is found in the cytoplasm. It carries out the reaction (2R)-3-phosphoglycerate + ATP = (2R)-3-phospho-glyceroyl phosphate + ADP. The protein operates within carbohydrate degradation; glycolysis; pyruvate from D-glyceraldehyde 3-phosphate: step 2/5. The sequence is that of Phosphoglycerate kinase from Roseiflexus sp. (strain RS-1).